The primary structure comprises 859 residues: Sulfate permease 1 (859 aa).

Residues N51 and N93 are each glycosylated (N-linked (GlcNAc...) asparagine). 8 consecutive transmembrane segments (helical) span residues 94 to 114, 116 to 136, 148 to 168, 173 to 193, 206 to 226, 234 to 254, 292 to 312, and 332 to 352; these read LTAK…KWFP, YNFT…CVLV, LSPE…SLFA, VCIG…AEVL, PIIA…LGIL, LISL…IIWG, FGLI…TFGI, and FYFY…TAIS. N-linked (GlcNAc...) asparagine glycans are attached at residues N358 and N391. A run of 4 helical transmembrane segments spans residues 395-415, 428-448, 468-488, and 525-545; these read EIPA…KSFG, LIAI…PATG, VFTG…FFFI, and FIVT…YFAM. N-linked (GlcNAc...) asparagine glycans are attached at residues N630, N653, and N718. One can recognise an STAS domain in the interval 630–808; it reads NTTVRPPPPG…SIIAGHSSFH (179 aa).

Belongs to the SLC26A/SulP transporter (TC 2.A.53) family.

The protein resides in the membrane. Its function is as follows. High affinity uptake of sulfate into the cell. The protein is Sulfate permease 1 (SUL1) of Saccharomyces cerevisiae (strain ATCC 204508 / S288c) (Baker's yeast).